Reading from the N-terminus, the 62-residue chain is Toxin Ct28 (62 aa).

The signal sequence occupies residues 1 to 22; the sequence is MKAFYGILIILLFCSMFKLNES. 3 cysteine pairs are disulfide-bonded: cysteine 29–cysteine 51, cysteine 35–cysteine 56, and cysteine 39–cysteine 58. Asparagine 61 carries the asparagine amide modification.

It belongs to the short scorpion toxin superfamily. Potassium channel inhibitor family. Alpha-KTx 02 subfamily. Expressed by the venom gland.

The protein resides in the secreted. Functionally, blocks voltage-gated potassium channels. In Centruroides tecomanus (Scorpion), this protein is Toxin Ct28.